The chain runs to 119 residues: MKLLASPFLLLLPVMLMSMVFSSPNPGVARSHGDQHLAPRRWLLEGGQECECKDWFLQAPKRKATAVLGPPRKQCPCDHVKGREKKNRHQKHHRKSQRPSRACQQFLKRCHLASFALPL.

Residues 1 to 22 (MKLLASPFLLLLPVMLMSMVFS) form the signal peptide. Positions 75–100 (CPCDHVKGREKKNRHQKHHRKSQRPS) are disordered. 2 cysteine pairs are disulfide-bonded: Cys75-Cys103 and Cys77-Cys110. Basic residues predominate over residues 82–98 (GREKKNRHQKHHRKSQR).

Belongs to the intercrine alpha (chemokine CxC) family. Likely to undergo an endoproteolytic process to form a four-cysteine-containing mature peptide with a canonical CXC chemokine scaffold after secretion. As to expression, detected in lung, trachea, lung, tongue thyroid, submaxillary gland, epididymis, and uterus tissues and at a lower level in ovary, prostate and in intestinal tissues.

The protein localises to the secreted. Chemokine that acts as a chemoattractant for monocytes, macrophages and dendritic cells. Plays a role in angiogenesis and possibly in the development of tumors. Acts as an anti-inflammatory in the stomach. May play a role in the innate defense against infections. Activates the C-X-C chemokine receptor GPR35 to induce a rapid and transient rise in the level of intracellular calcium ions. The sequence is that of C-X-C motif chemokine 17 (Cxcl17) from Mus musculus (Mouse).